We begin with the raw amino-acid sequence, 380 residues long: Cytochrome b (380 aa).

4 helical membrane-spanning segments follow: residues 34-54 (FGSLLGICLVTQILTGLLLAM), 78-99 (WLIRNLHANGASLFFICIYLHI), 114-134 (WNTGVILLLTLMATAFVGYVL), and 179-199 (FFALHFLLPFMIAGLTLIHLT). 2 residues coordinate heme b: His84 and His98. Heme b is bound by residues His183 and His197. His202 contributes to the a ubiquinone binding site. Transmembrane regions (helical) follow at residues 227–247 (LKDFLGFALMLFLLTALALFT), 289–309 (LGGVLALAASVLVLLLVPFLH), 321–341 (LSQTLFWILVSNLFILTWIGS), and 348–368 (FITIGQLASITYFTIILILFP).

Belongs to the cytochrome b family. The cytochrome bc1 complex contains 11 subunits: 3 respiratory subunits (MT-CYB, CYC1 and UQCRFS1), 2 core proteins (UQCRC1 and UQCRC2) and 6 low-molecular weight proteins (UQCRH/QCR6, UQCRB/QCR7, UQCRQ/QCR8, UQCR10/QCR9, UQCR11/QCR10 and a cleavage product of UQCRFS1). This cytochrome bc1 complex then forms a dimer. The cofactor is heme b.

Its subcellular location is the mitochondrion inner membrane. In terms of biological role, component of the ubiquinol-cytochrome c reductase complex (complex III or cytochrome b-c1 complex) that is part of the mitochondrial respiratory chain. The b-c1 complex mediates electron transfer from ubiquinol to cytochrome c. Contributes to the generation of a proton gradient across the mitochondrial membrane that is then used for ATP synthesis. This is Cytochrome b (MT-CYB) from Coracias caudatus (Lilac-breasted roller).